Consider the following 811-residue polypeptide: Transmembrane protease serine 6 (811 aa).

Topologically, residues 1 to 55 (MLLLFHSKRMPVAEAPQVAGGQGDGGDGEEAEPEGMFKACEDSKRKARGYLRLVP) are cytoplasmic. A helical; Signal-anchor for type II membrane protein transmembrane segment spans residues 56 to 76 (LFVLLALLVLASAGVLLWYFL). Residues 77 to 811 (GYKAEVMVSQ…VISWIQQVVT (735 aa)) are Extracellular-facing. In terms of domain architecture, SEA spans 84–209 (VSQVYSGSLR…EGLVILEASV (126 aa)). N-linked (GlcNAc...) asparagine glycans are attached at residues Asn136, Asn184, Asn216, Asn338, Asn433, and Asn453. 2 consecutive CUB domains span residues 213–336 (AALN…QACE) and 335–452 (CEVN…YGLY). Cysteines 335 and 366 form a disulfide. LDL-receptor class A domains lie at 457–489 (PCPG…ERNC), 490–526 (VCRA…EQCQ), and 530–567 (PCGT…EHCD). Cystine bridges form between Cys458–Cys470, Cys464–Cys480, Cys474–Cys489, Cys491–Cys503, Cys497–Cys516, Cys510–Cys525, Cys531–Cys543, Cys538–Cys557, Cys551–Cys566, and Cys602–Cys618. Asn518 carries an N-linked (GlcNAc...) asparagine glycan. Positions 577–811 (IVGGAVSSEG…VISWIQQVVT (235 aa)) constitute a Peptidase S1 domain. Active-site charge relay system residues include His617 and Asp668. Cystine bridges form between Cys702/Cys768, Cys733/Cys747, and Cys758/Cys787. Catalysis depends on Ser762, which acts as the Charge relay system.

This sequence belongs to the peptidase S1 family. In terms of assembly, interacts with HJV. In terms of processing, the single-chain zymogen undergoes autoproteolytic processing. This results in TMPRSS6 shedding from the cell surface and conversion into an activated two-chains form which is released extracellularly. The process involves a trans-activation mechanism that requires TMPRSS6 oligomerization.

It is found in the cell membrane. Its function is as follows. Membrane-bound serine protease. Through the cleavage of cell surface hemojuvelin (HJV), a regulator of the expression of the iron absorption-regulating hormone hepicidin/HAMP, plays a role in iron homeostasis. The sequence is that of Transmembrane protease serine 6 (TMPRSS6) from Homo sapiens (Human).